We begin with the raw amino-acid sequence, 392 residues long: Enoyl-[acyl-carrier-protein] reductase [NADH] (392 aa).

NAD(+) is bound by residues 48-53, 74-75, 111-112, and 139-140; these read GCSTGY, FE, DA, and LA. Tyr-225 is a binding site for substrate. Tyr-235 functions as the Proton donor in the catalytic mechanism. NAD(+) is bound by residues Lys-244 and 273–275; that span reads LVT.

The protein belongs to the TER reductase family. As to quaternary structure, monomer.

It carries out the reaction a 2,3-saturated acyl-[ACP] + NAD(+) = a (2E)-enoyl-[ACP] + NADH + H(+). The protein operates within lipid metabolism; fatty acid biosynthesis. In terms of biological role, involved in the final reduction of the elongation cycle of fatty acid synthesis (FAS II). Catalyzes the reduction of a carbon-carbon double bond in an enoyl moiety that is covalently linked to an acyl carrier protein (ACP). In Idiomarina loihiensis (strain ATCC BAA-735 / DSM 15497 / L2-TR), this protein is Enoyl-[acyl-carrier-protein] reductase [NADH].